The sequence spans 614 residues: Adenylate kinase 7 (614 aa).

Residues 258–503 form an adenylate kinase region; it reads PIKICILGPP…KEIGKPRNYG (246 aa). Residue 268–273 coordinates ATP; sequence AVGKSS. An NMP region spans residues 288–346; that stretch reads KMKDVIAEAIAKLEAIVAPKDSVEGEEEGEEEEEEENVDDAQELLDGIKESMEQNAGRL. The disordered stretch occupies residues 308–327; that stretch reads DSVEGEEEGEEEEEEENVDD. Residues 311-327 show a composition bias toward acidic residues; it reads EGEEEGEEEEEEENVDD. Residues 323–346, 373–376, and glutamine 380 contribute to the AMP site; these read ENVD…AGRL and GFPK. A coiled-coil region spans residues 376–568; it reads KTYDQAKDLF…EERELLEVQS (193 aa). Residues 428–438 are LID; it reads NLPESVVAGTH. Arginine 446 is a binding site for AMP. Glycine 478 contributes to the ATP binding site. Residues 570 to 614 form a DPY-30 region; sequence PLRNYLMTYVMPTLMQGLNECCKVRPEDPVDFLAEYLFKNNPEMQ.

In the central section; belongs to the adenylate kinase family. The protein in the C-terminal section; belongs to the dpy-30 family.

The protein resides in the cytoplasm. The protein localises to the cytosol. It localises to the cell projection. Its subcellular location is the cilium. It is found in the flagellum. It carries out the reaction AMP + ATP = 2 ADP. The enzyme catalyses a 2'-deoxyribonucleoside 5'-diphosphate + ATP = a 2'-deoxyribonucleoside 5'-triphosphate + ADP. It catalyses the reaction a ribonucleoside 5'-diphosphate + ATP = a ribonucleoside 5'-triphosphate + ADP. Functionally, nucleoside monophosphate (NMP) kinase that catalyzes the reversible transfer of the terminal phosphate group between nucleoside triphosphates and monophosphates. Has highest activity toward AMP, and weaker activity toward dAMP, CMP and dCMP. Also displays broad nucleoside diphosphate kinase activity. Involved in maintaining ciliary structure and function. This is Adenylate kinase 7 (Ak7) from Mus musculus (Mouse).